Consider the following 235-residue polypeptide: Leucyl/phenylalanyl-tRNA--protein transferase (235 aa).

Belongs to the L/F-transferase family.

It localises to the cytoplasm. It carries out the reaction N-terminal L-lysyl-[protein] + L-leucyl-tRNA(Leu) = N-terminal L-leucyl-L-lysyl-[protein] + tRNA(Leu) + H(+). It catalyses the reaction N-terminal L-arginyl-[protein] + L-leucyl-tRNA(Leu) = N-terminal L-leucyl-L-arginyl-[protein] + tRNA(Leu) + H(+). The catalysed reaction is L-phenylalanyl-tRNA(Phe) + an N-terminal L-alpha-aminoacyl-[protein] = an N-terminal L-phenylalanyl-L-alpha-aminoacyl-[protein] + tRNA(Phe). Functions in the N-end rule pathway of protein degradation where it conjugates Leu, Phe and, less efficiently, Met from aminoacyl-tRNAs to the N-termini of proteins containing an N-terminal arginine or lysine. The chain is Leucyl/phenylalanyl-tRNA--protein transferase from Magnetococcus marinus (strain ATCC BAA-1437 / JCM 17883 / MC-1).